Here is a 269-residue protein sequence, read N- to C-terminus: Eukaryotic translation initiation factor 3 subunit G-2 (269 aa).

In terms of domain architecture, RRM spans 189-267 (SAVRISNLSE…LILCVEWSKP (79 aa)).

Belongs to the eIF-3 subunit G family. In terms of assembly, component of the eukaryotic translation initiation factor 3 (eIF-3) complex. The eIF-3 complex interacts with pix.

The protein resides in the cytoplasm. Its function is as follows. RNA-binding component of the eukaryotic translation initiation factor 3 (eIF-3) complex, which is involved in protein synthesis of a specialized repertoire of mRNAs and, together with other initiation factors, stimulates binding of mRNA and methionyl-tRNAi to the 40S ribosome. The eIF-3 complex specifically targets and initiates translation of a subset of mRNAs involved in cell proliferation. This subunit can bind 18S rRNA. The sequence is that of Eukaryotic translation initiation factor 3 subunit G-2 from Drosophila ananassae (Fruit fly).